Consider the following 793-residue polypeptide: E3 UFM1-protein ligase 1 (793 aa).

Residues 2–212 (AADWEEIRRL…INNLLNLYGF (211 aa)) form a required for E3 UFM1-protein ligase activity region. 2 disordered regions span residues 405-472 (ALLE…RNKL) and 745-793 (GAEK…SVTE). A compositionally biased stretch (gly residues) spans 427 to 439 (EGGGSVKSGGGGN). Positions 767-781 (SLQRELHSLSRDIKD) are enriched in basic and acidic residues.

It belongs to the UFL1 family. Catalytic component of the UFM1 ribosome E3 ligase (UREL) complex. Interacts with E2-like enzyme UFC1.

It localises to the endoplasmic reticulum membrane. The protein localises to the cytoplasm. The protein resides in the cytosol. Its subcellular location is the nucleus. It is found in the chromosome. Its function is as follows. E3 protein ligase that mediates ufmylation, the covalent attachment of the ubiquitin-like modifier UFM1 to lysine residues on target proteins, and which plays a key role in various processes, such as ribosome recycling, response to DNA damage, interferon response or reticulophagy (also called ER-phagy). As part of the UREL complex, plays a key role in ribosome recycling by catalyzing mono-ufmylation of RPL26/uL24 subunit of the 60S ribosome. Ufmylation of RPL26/uL24 occurs on free 60S ribosomes following ribosome dissociation: it weakens the junction between post-termination 60S subunits and SEC61 translocons, promoting release and recycling of the large ribosomal subunit from the endoplasmic reticulum membrane. Ufmylation of RPL26/uL24 and subsequent 60S ribosome recycling either take place after normal termination of translation or after ribosome stalling during cotranslational translocation at the endoplasmic reticulum. Involved in reticulophagy in response to endoplasmic reticulum stress by mediating ufmylation of proteins such as CYB5R3 and RPN1, thereby promoting lysosomal degradation of ufmylated proteins. Ufmylation in response to endoplasmic reticulum stress is essential for processes such as hematopoiesis, blood vessel morphogenesis or inflammatory response. This is E3 UFM1-protein ligase 1 from Danio rerio (Zebrafish).